The primary structure comprises 477 residues: Cysteine protease ATG4b (477 aa).

A disordered region spans residues Ser-11–Asn-39. Residues Ser-25–Asn-39 show a composition bias toward polar residues. Residue Cys-173 is the Nucleophile of the active site. Active-site residues include Asp-368 and His-370. The disordered stretch occupies residues Ala-453 to Leu-477. Low complexity predominate over residues Glu-454–Ile-465.

Belongs to the peptidase C54 family. In terms of assembly, interacts with ATG8a and ATG8d. Constitutively expressed.

It is found in the cytoplasm. It carries out the reaction [protein]-C-terminal L-amino acid-glycyl-phosphatidylethanolamide + H2O = [protein]-C-terminal L-amino acid-glycine + a 1,2-diacyl-sn-glycero-3-phosphoethanolamine. Its function is as follows. Cysteine protease that plays a key role in autophagy by mediating both proteolytic activation and delipidation of ATG8 family proteins. The protease activity is required for proteolytic activation of ATG8 family proteins: cleaves the C-terminal amino acid of ATG8 proteins to reveal a C-terminal glycine. Exposure of the glycine at the C-terminus is essential for ATG8 proteins conjugation to phosphatidylethanolamine (PE) and insertion to membranes, which is necessary for autophagy. In addition to the protease activity, also mediates delipidation of PE-conjugated ATG8 proteins. The chain is Cysteine protease ATG4b from Arabidopsis thaliana (Mouse-ear cress).